The chain runs to 381 residues: Cytochrome b (381 aa).

Helical transmembrane passes span 38-58 (FGSL…FLAM), 82-103 (WLLR…YFHI), 118-138 (WMTG…GYVL), and 183-203 (FFTF…IHLL). Residues histidine 88 and histidine 102 each coordinate heme b. Heme b is bound by residues histidine 187 and histidine 201. Histidine 206 lines the a ubiquinone pocket. 4 helical membrane-spanning segments follow: residues 231 to 251 (IKDT…SLTS), 293 to 313 (LGGV…PFTF), 325 to 345 (VAQP…WIGA), and 352 to 372 (YNFL…FTPI).

This sequence belongs to the cytochrome b family. As to quaternary structure, the main subunits of complex b-c1 are: cytochrome b, cytochrome c1 and the Rieske protein. Requires heme b as cofactor.

The protein localises to the mitochondrion inner membrane. Functionally, component of the ubiquinol-cytochrome c reductase complex (complex III or cytochrome b-c1 complex) that is part of the mitochondrial respiratory chain. The b-c1 complex mediates electron transfer from ubiquinol to cytochrome c. Contributes to the generation of a proton gradient across the mitochondrial membrane that is then used for ATP synthesis. The protein is Cytochrome b (MT-CYB) of Artemia franciscana (Brine shrimp).